The primary structure comprises 468 residues: ATP synthase subunit beta (468 aa).

155-162 lines the ATP pocket; it reads GGAGVGKT.

It belongs to the ATPase alpha/beta chains family. F-type ATPases have 2 components, CF(1) - the catalytic core - and CF(0) - the membrane proton channel. CF(1) has five subunits: alpha(3), beta(3), gamma(1), delta(1), epsilon(1). CF(0) has three main subunits: a(1), b(2) and c(9-12). The alpha and beta chains form an alternating ring which encloses part of the gamma chain. CF(1) is attached to CF(0) by a central stalk formed by the gamma and epsilon chains, while a peripheral stalk is formed by the delta and b chains.

It localises to the cell membrane. It catalyses the reaction ATP + H2O + 4 H(+)(in) = ADP + phosphate + 5 H(+)(out). Its function is as follows. Produces ATP from ADP in the presence of a proton gradient across the membrane. The catalytic sites are hosted primarily by the beta subunits. This is ATP synthase subunit beta from Streptococcus pneumoniae serotype 19F (strain G54).